Consider the following 125-residue polypeptide: Prefoldin subunit beta (125 aa).

It belongs to the prefoldin subunit beta family. Heterohexamer of two alpha and four beta subunits.

The protein resides in the cytoplasm. Its function is as follows. Molecular chaperone capable of stabilizing a range of proteins. Seems to fulfill an ATP-independent, HSP70-like function in archaeal de novo protein folding. This chain is Prefoldin subunit beta, found in Pyrobaculum islandicum (strain DSM 4184 / JCM 9189 / GEO3).